A 3291-amino-acid polypeptide reads, in one-letter code: Protocadherin-16 (3291 aa).

The signal sequence occupies residues 1–35 (MQKELSVALSCPGMKSLRTLLPLLVLLGATVPGSW). Topologically, residues 36–2933 (GQAGSLDLQI…PDLNLLLVGA (2898 aa)) are extracellular. 27 consecutive Cadherin domains span residues 37–137 (QAGS…APAF), 138–249 (PQAR…APAF), 250–356 (NQSR…QPSM), 369–466 (VSEA…APAF), 476–572 (LPEV…EPQF), 573–679 (QRTF…PPQF), 680–784 (YPRE…PPIF), 785–888 (EQLQ…SPAF), 889–994 (PAPE…APRF), 995–1105 (DSPT…EPTF), 1100–1205 (SEEP…SPTF), 1218–1317 (IQVP…SPDL), 1326–1429 (VPVV…APTF), 1430–1539 (ARDP…APVF), 1539–1642 (FASP…APAF), 1643–1744 (PQQE…TPTF), 1745–1848 (GNTH…APVF), 1849–1953 (PVPS…APAF), 1976–2061 (LATL…GPRF), 2062–2164 (PRTS…APRF), 2165–2270 (LRPH…RPTI), 2270–2369 (IPQP…VPTF), 2370–2475 (SQSL…APSF), 2476–2595 (TLPH…PPVF), 2596–2699 (TRAS…GPAF), 2700–2806 (PLSL…DPVF), and 2807–2926 (LAPS…APDL). Residue asparagine 396 is glycosylated (N-linked (GlcNAc...) asparagine). Residue asparagine 2354 is glycosylated (N-linked (GlcNAc...) asparagine). A disordered region spans residues 2867 to 2886 (SRAPGSGTTTSGGGGRTRRE). A helical membrane pass occupies residues 2934–2954 (VAASLGVVVVLALAALVLGLV). At 2955 to 3291 (RARSRKAEAA…EPPDDTELRI (337 aa)) the chain is on the cytoplasmic side. A disordered region spans residues 2978–3033 (SLQKLGREPPSPPPSEHLYHQTLPSYGGPGAGGPYPRGGSLDPSHSSGRGSAEAAE). The segment covering 3004–3013 (GGPGAGGPYP) has biased composition (gly residues). Serine 3048 carries the phosphoserine modification. Disordered regions lie at residues 3051–3081 (SSLA…APDT) and 3226–3291 (ASHR…ELRI). The span at 3237 to 3259 (SLSSAAMSPSFSPSLSPLAARSP) shows a compositional bias: low complexity. Over residues 3270-3279 (PSASALSTES) the composition is skewed to polar residues.

As to quaternary structure, heterophilic interaction with FAT4; this interaction affects their respective protein levels. In terms of tissue distribution, expressed in the epicardium and atrioventricular sulcus (at protein level).

The protein resides in the cell membrane. In terms of biological role, calcium-dependent cell-adhesion protein. Mediates functions in neuroprogenitor cell proliferation and differentiation. In the heart, has a critical role for proper morphogenesis of the mitral valve, acting in the regulation of cell migration involved in valve formation. The protein is Protocadherin-16 (Dchs1) of Mus musculus (Mouse).